The following is a 237-amino-acid chain: Probable glutathione-independent glyoxalase HSP32 (237 aa).

Active-site residues include Cys-138, His-139, and Glu-170.

This sequence belongs to the peptidase C56 family. HSP31-like subfamily. As to quaternary structure, homodimer.

The protein localises to the cytoplasm. Its subcellular location is the P-body. The enzyme catalyses methylglyoxal + H2O = (R)-lactate + H(+). Its function is as follows. Catalyzes the conversion of methylglyoxal (MG) to D-lactate in a single glutathione (GSH)-independent step. May play a role in detoxifying endogenously produced glyoxals. Involved in protection against reactive oxygen species (ROS). Important for viability in stationary phase. May negatively regulate TORC1 in response to nutrient limitation. This is Probable glutathione-independent glyoxalase HSP32 from Saccharomyces cerevisiae (strain ATCC 204508 / S288c) (Baker's yeast).